Consider the following 213-residue polypeptide: 3-isopropylmalate dehydratase small subunit (213 aa).

This sequence belongs to the LeuD family. LeuD type 1 subfamily. In terms of assembly, heterodimer of LeuC and LeuD.

It catalyses the reaction (2R,3S)-3-isopropylmalate = (2S)-2-isopropylmalate. Its pathway is amino-acid biosynthesis; L-leucine biosynthesis; L-leucine from 3-methyl-2-oxobutanoate: step 2/4. Functionally, catalyzes the isomerization between 2-isopropylmalate and 3-isopropylmalate, via the formation of 2-isopropylmaleate. This chain is 3-isopropylmalate dehydratase small subunit, found in Aromatoleum aromaticum (strain DSM 19018 / LMG 30748 / EbN1) (Azoarcus sp. (strain EbN1)).